Here is a 64-residue protein sequence, read N- to C-terminus: Large ribosomal subunit protein bL35 (64 aa).

This sequence belongs to the bacterial ribosomal protein bL35 family.

The sequence is that of Large ribosomal subunit protein bL35 from Coxiella burnetii (strain RSA 331 / Henzerling II).